We begin with the raw amino-acid sequence, 445 residues long: MIEDNKENKDHAPERGRTAIIFSLKNEVGGLVKALKLFQEKHVNLVHIESRKSKRRNSEFEIFVDCDSNREQLNEIFQLLKSHVSIVSMNPTEHFNVQEDGDMENIPWYPKKISDLDKCANRVLMYGSDLDADHPGFKDNVYRKRRKYFADLAMNYKHGDPIPEIEFTEEEIKTWGTVYRELNKLYPTHACREYLKNLPLLTKYCGYREDNIPQLEDVSRFLKERTGFTIRPVAGYLSPRDFLAGLAFRVFHCTQYVRHSSDPLYTPEPDTCHELLGHVPLLAEPSFAQFSQEIGLASLGASDEAVQKLATCYFFTVEFGLCKQEGQLRVYGAGLLSSISELKHSLSGSAKVKPFDPKVTCKQECLITTFQEVYFVSESFEEAKEKMREFAKTIKRPFGVKYNPYTQSVQILKDTKSIASVVNELRHELDIVSDALSKMGKQLEV.

Residues 19–94 (AIIFSLKNEV…SIVSMNPTEH (76 aa)) enclose the ACT domain. Residue S58 is modified to Phosphoserine; by PKA. Positions 236, 258, and 266 each coordinate L-tryptophan. Residues H273, H278, and E318 each coordinate Fe cation. L-tryptophan is bound by residues S337 and I367.

It belongs to the biopterin-dependent aromatic amino acid hydroxylase family. In terms of assembly, homotetramer. Fe(2+) is required as a cofactor.

The catalysed reaction is (6R)-L-erythro-5,6,7,8-tetrahydrobiopterin + L-tryptophan + O2 = 5-hydroxy-L-tryptophan + (4aS,6R)-4a-hydroxy-L-erythro-5,6,7,8-tetrahydrobiopterin. The protein operates within aromatic compound metabolism; serotonin biosynthesis; serotonin from L-tryptophan: step 1/2. Functionally, oxidizes L-tryptophan to 5-hydroxy-l-tryptophan in the rate-determining step of serotonin biosynthesis. The chain is Tryptophan 5-hydroxylase 1 (TPH1) from Gallus gallus (Chicken).